We begin with the raw amino-acid sequence, 721 residues long: Ribonucleoside-diphosphate reductase subunit alpha (721 aa).

Substrate-binding positions include threonine 168, 184 to 185 (SC), glycine 213, 393 to 397 (NLCSE), and 595 to 599 (PTGSI). The cysteines at positions 185 and 422 are disulfide-linked. Catalysis depends on asparagine 393, which acts as the Proton acceptor. Cysteine 395 functions as the Cysteine radical intermediate in the catalytic mechanism. The active-site Proton acceptor is glutamate 397.

This sequence belongs to the ribonucleoside diphosphate reductase large chain family. Tetramer of two alpha and two beta subunits.

It carries out the reaction a 2'-deoxyribonucleoside 5'-diphosphate + [thioredoxin]-disulfide + H2O = a ribonucleoside 5'-diphosphate + [thioredoxin]-dithiol. Under complex allosteric control mediated by deoxynucleoside triphosphates and ATP binding. The type of nucleotide bound at the specificity site determines substrate preference. It seems probable that ATP makes the enzyme reduce CDP and UDP, dGTP favors ADP reduction and dTTP favors GDP reduction. Provides the precursors necessary for DNA synthesis. Catalyzes the biosynthesis of deoxyribonucleotides from the corresponding ribonucleotides. This Mycobacterium leprae (strain TN) protein is Ribonucleoside-diphosphate reductase subunit alpha (nrdE).